A 185-amino-acid polypeptide reads, in one-letter code: Large ribosomal subunit protein uL5 (185 aa).

Belongs to the universal ribosomal protein uL5 family. In terms of assembly, part of the 50S ribosomal subunit; part of the 5S rRNA/L5/L18/L25 subcomplex. Contacts the 5S rRNA and the P site tRNA. Forms a bridge to the 30S subunit in the 70S ribosome.

Its function is as follows. This is one of the proteins that bind and probably mediate the attachment of the 5S RNA into the large ribosomal subunit, where it forms part of the central protuberance. In the 70S ribosome it contacts protein S13 of the 30S subunit (bridge B1b), connecting the 2 subunits; this bridge is implicated in subunit movement. Contacts the P site tRNA; the 5S rRNA and some of its associated proteins might help stabilize positioning of ribosome-bound tRNAs. The polypeptide is Large ribosomal subunit protein uL5 (Azorhizobium caulinodans (strain ATCC 43989 / DSM 5975 / JCM 20966 / LMG 6465 / NBRC 14845 / NCIMB 13405 / ORS 571)).